The sequence spans 47 residues: Large ribosomal subunit protein bL34 (47 aa).

Belongs to the bacterial ribosomal protein bL34 family.

The sequence is that of Large ribosomal subunit protein bL34 from Nocardia farcinica (strain IFM 10152).